Consider the following 933-residue polypeptide: Bifunctional uridylyltransferase/uridylyl-removing enzyme (933 aa).

Residues Met-1–Asp-390 are uridylyltransferase. The interval Val-391 to Thr-745 is uridylyl-removing. The region spanning Val-506 to Leu-628 is the HD domain. ACT domains lie at Glu-746–Lys-829 and Val-859–Ala-933.

Belongs to the GlnD family. Mg(2+) is required as a cofactor.

It catalyses the reaction [protein-PII]-L-tyrosine + UTP = [protein-PII]-uridylyl-L-tyrosine + diphosphate. The enzyme catalyses [protein-PII]-uridylyl-L-tyrosine + H2O = [protein-PII]-L-tyrosine + UMP + H(+). Its activity is regulated as follows. Uridylyltransferase (UTase) activity is inhibited by glutamine, while glutamine activates uridylyl-removing (UR) activity. Uridylylation process is dependent on ATP and 2-oxoglutarate, which are effector molecules that likely bind to PII proteins and control their activity. In terms of biological role, modifies, by uridylylation and deuridylylation, the PII regulatory proteins GlnB and GlnZ, in response to the nitrogen status of the cell that GlnD senses through the glutamine level. Under low glutamine levels, catalyzes the conversion of the PII proteins and UTP to PII-UMP and PPi, while under higher glutamine levels, GlnD hydrolyzes PII-UMP to PII and UMP (deuridylylation). Thus, controls uridylylation state and activity of the PII proteins, and plays an important role in the regulation of nitrogen fixation and metabolism. This chain is Bifunctional uridylyltransferase/uridylyl-removing enzyme, found in Azospirillum brasilense.